A 187-amino-acid polypeptide reads, in one-letter code: Interferon beta (187 aa).

The signal sequence occupies residues 1 to 21 (MTNKCLLQIALLLCFSTTALS). Tyr-24 carries the post-translational modification Phosphotyrosine. An intrachain disulfide couples Cys-52 to Cys-162. N-linked (GlcNAc...) asparagine glycosylation is present at Asn-101.

The protein belongs to the alpha/beta interferon family. In terms of assembly, monomer.

The protein localises to the secreted. In terms of biological role, type I interferon cytokine that plays a key role in the innate immune response to infection, developing tumors and other inflammatory stimuli. Signals via binding to high-affinity (IFNAR2) and low-affinity (IFNAR1) heterodimeric receptor, activating the canonical Jak-STAT signaling pathway resulting in transcriptional activation or repression of interferon-regulated genes that encode the effectors of the interferon response, such as antiviral proteins, regulators of cell proliferation and differentiation, and immunoregulatory proteins. Signals mostly via binding to a IFNAR1-IFNAR2 heterodimeric receptor, but can also function with IFNAR1 alone and independently of Jak-STAT pathways. Elicits a wide variety of responses, including antiviral and antibacterial activities, and can regulate the development of B-cells, myelopoiesis and lipopolysaccharide (LPS)-inducible production of tumor necrosis factor. Plays a role in neuronal homeostasis by regulating dopamine turnover and protecting dopaminergic neurons: acts by promoting neuronal autophagy and alpha-synuclein clearance, thereby preventing dopaminergic neuron loss. IFNB1 is more potent than interferon-alpha (IFN-alpha) in inducing the apoptotic and antiproliferative pathways required for control of tumor cell growth. This Homo sapiens (Human) protein is Interferon beta.